We begin with the raw amino-acid sequence, 338 residues long: O-methyltransferase 4 (338 aa).

S-adenosyl-L-methionine-binding residues include glycine 184, aspartate 207, asparagine 230, phenylalanine 231, lysine 244, and arginine 245. Histidine 248 acts as the Proton acceptor in catalysis.

The protein belongs to the class I-like SAM-binding methyltransferase superfamily. Cation-independent O-methyltransferase family. COMT subfamily.

It carries out the reaction (3,5-dichloro-2,4,6-trihydroxyphenyl)hexan-1-one + S-adenosyl-L-methionine = 1-(3,5-dichloro-2,6-dihydroxy-4-methoxyphenyl)hexan-1-one + S-adenosyl-L-homocysteine + H(+). The protein is O-methyltransferase 4 (omt4) of Dictyostelium discoideum (Social amoeba).